Here is a 78-residue protein sequence, read N- to C-terminus: UPF0291 protein ABC2165 (78 aa).

The disordered stretch occupies residues 56-78; that stretch reads AKGNDVTPQKLKDSKAQKHKRLH.

Belongs to the UPF0291 family.

The protein localises to the cytoplasm. The chain is UPF0291 protein ABC2165 from Shouchella clausii (strain KSM-K16) (Alkalihalobacillus clausii).